Consider the following 199-residue polypeptide: Prostatic spermine-binding protein (199 aa).

An N-terminal signal peptide occupies residues 1-18 (MLLLLTLAFLASPTCRAQ). A Jacalin-type lectin domain is found at 19 to 151 (NVLGNAAGKY…VRGIGFKWGN (133 aa)). An N-linked (GlcNAc...) asparagine glycan is attached at N62. The tract at residues 159–199 (HYNNKEDKADNKDADNKDADNKDDGDEDDDGNDDDDQKDES) is disordered. Over residues 160–180 (YNNKEDKADNKDADNKDADNK) the composition is skewed to basic and acidic residues. Positions 181 to 199 (DDGDEDDDGNDDDDQKDES) are enriched in acidic residues.

The protein to rat SBP. In terms of tissue distribution, prostate.

Functionally, this protein seems to be functional equivalent to rat prostatic spermine-binding protein, which is involved in polyamine binding. In Mus musculus (Mouse), this protein is Prostatic spermine-binding protein (Sbp).